The chain runs to 352 residues: Holliday junction branch migration complex subunit RuvB (352 aa).

A large ATPase domain (RuvB-L) region spans residues 13-201 (FSLRKKELRL…FGISQKIEFY (189 aa)). ATP is bound by residues Arg41, Gly82, Lys85, Thr86, Thr87, 148–150 (EDF), Arg191, Tyr201, and Arg238. Thr86 contributes to the Mg(2+) binding site. Positions 202–273 (TYDELKQIIV…LIKKALNSYQ (72 aa)) are small ATPAse domain (RuvB-S). The segment at 276–352 (EKGLDSLDRN…KYIDSKNENF (77 aa)) is head domain (RuvB-H). Positions 330 and 335 each coordinate DNA.

Belongs to the RuvB family. As to quaternary structure, homohexamer. Forms an RuvA(8)-RuvB(12)-Holliday junction (HJ) complex. HJ DNA is sandwiched between 2 RuvA tetramers; dsDNA enters through RuvA and exits via RuvB. An RuvB hexamer assembles on each DNA strand where it exits the tetramer. Each RuvB hexamer is contacted by two RuvA subunits (via domain III) on 2 adjacent RuvB subunits; this complex drives branch migration. In the full resolvosome a probable DNA-RuvA(4)-RuvB(12)-RuvC(2) complex forms which resolves the HJ.

The protein localises to the cytoplasm. The enzyme catalyses ATP + H2O = ADP + phosphate + H(+). In terms of biological role, the RuvA-RuvB-RuvC complex processes Holliday junction (HJ) DNA during genetic recombination and DNA repair, while the RuvA-RuvB complex plays an important role in the rescue of blocked DNA replication forks via replication fork reversal (RFR). RuvA specifically binds to HJ cruciform DNA, conferring on it an open structure. The RuvB hexamer acts as an ATP-dependent pump, pulling dsDNA into and through the RuvAB complex. RuvB forms 2 homohexamers on either side of HJ DNA bound by 1 or 2 RuvA tetramers; 4 subunits per hexamer contact DNA at a time. Coordinated motions by a converter formed by DNA-disengaged RuvB subunits stimulates ATP hydrolysis and nucleotide exchange. Immobilization of the converter enables RuvB to convert the ATP-contained energy into a lever motion, pulling 2 nucleotides of DNA out of the RuvA tetramer per ATP hydrolyzed, thus driving DNA branch migration. The RuvB motors rotate together with the DNA substrate, which together with the progressing nucleotide cycle form the mechanistic basis for DNA recombination by continuous HJ branch migration. Branch migration allows RuvC to scan DNA until it finds its consensus sequence, where it cleaves and resolves cruciform DNA. This Prochlorococcus marinus (strain MIT 9215) protein is Holliday junction branch migration complex subunit RuvB.